Reading from the N-terminus, the 126-residue chain is Histone H2B type 1-K (126 aa).

Residues 1–12 (MPEPAKSAPAPK) are compositionally biased toward low complexity. Residues 1 to 36 (MPEPAKSAPAPKKGSKKAVTKAQKIDGKKRKRSRKE) form a disordered region. N-acetylproline is present on Pro2. Residue Glu3 is modified to ADP-ribosyl glutamic acid. N6-(2-hydroxyisobutyryl)lysine; alternate is present on Lys6. An N6-(beta-hydroxybutyryl)lysine; alternate modification is found at Lys6. The residue at position 6 (Lys6) is an N6-acetyllysine; alternate. Lys6 carries the post-translational modification N6-butyryllysine; alternate. Lys6 bears the N6-crotonyllysine; alternate mark. Lys6 carries the N6-lactoyllysine; alternate modification. A Glycyl lysine isopeptide (Lys-Gly) (interchain with G-Cter in SUMO2); alternate cross-link involves residue Lys6. Position 7 is an ADP-ribosylserine (Ser7). Lys12 is modified (N6-(beta-hydroxybutyryl)lysine; alternate). N6-acetyllysine; alternate is present on residues Lys12 and Lys13. An N6-crotonyllysine; alternate mark is found at Lys12 and Lys13. Lys12 carries the post-translational modification N6-lactoyllysine; alternate. N6-(2-hydroxyisobutyryl)lysine; alternate is present on Lys13. Ser15 is modified (phosphoserine; by STK4/MST1). An N6-acetyllysine; alternate mark is found at Lys16, Lys17, Lys21, and Lys24. Lys16, Lys17, Lys21, Lys24, and Lys35 each carry N6-crotonyllysine; alternate. An N6-lactoyllysine; alternate mark is found at Lys16, Lys17, Lys21, and Lys24. Lys17 bears the N6-glutaryllysine; alternate mark. N6-(2-hydroxyisobutyryl)lysine; alternate occurs at positions 21, 24, and 35. Position 21 is an N6-(beta-hydroxybutyryl)lysine; alternate (Lys21). At Lys21 the chain carries N6-butyryllysine; alternate. A Glycyl lysine isopeptide (Lys-Gly) (interchain with G-Cter in SUMO2); alternate cross-link involves residue Lys21. Lys35 carries the N6-(beta-hydroxybutyryl)lysine; alternate modification. N6-glutaryllysine; alternate is present on Lys35. Position 35 is an N6-succinyllysine; alternate (Lys35). Lys35 is covalently cross-linked (Glycyl lysine isopeptide (Lys-Gly) (interchain with G-Cter in ubiquitin); alternate). Glu36 bears the PolyADP-ribosyl glutamic acid mark. Position 37 is a phosphoserine; by AMPK (Ser37). N6-(2-hydroxyisobutyryl)lysine; alternate occurs at positions 44, 47, and 58. An N6-lactoyllysine; alternate modification is found at Lys44. 2 positions are modified to N6-glutaryllysine; alternate: Lys44 and Lys47. The residue at position 47 (Lys47) is an N6-methyllysine; alternate. N6,N6-dimethyllysine; alternate is present on Lys58. Residue Arg80 is modified to Dimethylated arginine. N6-(2-hydroxyisobutyryl)lysine; alternate is present on Lys86. Lys86 bears the N6-acetyllysine; alternate mark. At Lys86 the chain carries N6-lactoyllysine; alternate. N6,N6,N6-trimethyllysine; alternate is present on Lys86. Omega-N-methylarginine is present on residues Arg87 and Arg93. Lys109 is modified (N6-(2-hydroxyisobutyryl)lysine; alternate). Lys109 bears the N6-lactoyllysine; alternate mark. Lys109 is modified (N6-glutaryllysine; alternate). An N6-methyllysine; alternate modification is found at Lys109. Ser113 is a glycosylation site (O-linked (GlcNAc) serine). Thr116 bears the Phosphothreonine mark. N6-(2-hydroxyisobutyryl)lysine; alternate occurs at positions 117 and 121. N6-(beta-hydroxybutyryl)lysine; alternate is present on Lys117. Residues Lys117 and Lys121 each carry the N6-lactoyllysine; alternate modification. Residues Lys117 and Lys121 each carry the N6-glutaryllysine; alternate modification. Residues Lys117 and Lys121 each carry the N6-succinyllysine; alternate modification. Residue Lys117 is modified to N6-methylated lysine; alternate. Lys121 participates in a covalent cross-link: Glycyl lysine isopeptide (Lys-Gly) (interchain with G-Cter in ubiquitin); alternate.

This sequence belongs to the histone H2B family. The nucleosome is a histone octamer containing two molecules each of H2A, H2B, H3 and H4 assembled in one H3-H4 heterotetramer and two H2A-H2B heterodimers. The octamer wraps approximately 147 bp of DNA. In terms of processing, monoubiquitination at Lys-35 (H2BK34Ub) by the MSL1/MSL2 dimer is required for histone H3 'Lys-4' (H3K4me) and 'Lys-79' (H3K79me) methylation and transcription activation at specific gene loci, such as HOXA9 and MEIS1 loci. Similarly, monoubiquitination at Lys-121 (H2BK120Ub) by the RNF20/40 complex gives a specific tag for epigenetic transcriptional activation and is also prerequisite for histone H3 'Lys-4' and 'Lys-79' methylation. It also functions cooperatively with the FACT dimer to stimulate elongation by RNA polymerase II. H2BK120Ub also acts as a regulator of mRNA splicing: deubiquitination by USP49 is required for efficient cotranscriptional splicing of a large set of exons. Post-translationally, phosphorylated on Ser-15 (H2BS14ph) by STK4/MST1 during apoptosis; which facilitates apoptotic chromatin condensation. Also phosphorylated on Ser-15 in response to DNA double strand breaks (DSBs), and in correlation with somatic hypermutation and immunoglobulin class-switch recombination. Phosphorylation at Ser-37 (H2BS36ph) by AMPK in response to stress promotes transcription. GlcNAcylation at Ser-113 promotes monoubiquitination of Lys-121. It fluctuates in response to extracellular glucose, and associates with transcribed genes. In terms of processing, ADP-ribosylated by PARP1 or PARP2 on Ser-7 (H2BS6ADPr) in response to DNA damage. H2BS6ADPr promotes recruitment of CHD1L. Mono-ADP-ribosylated on Glu-3 (H2BE2ADPr) by PARP3 in response to single-strand breaks. Poly ADP-ribosylation on Glu-36 (H2BE35ADPr) by PARP1 regulates adipogenesis: it inhibits phosphorylation at Ser-37 (H2BS36ph), thereby blocking expression of pro-adipogenetic genes. Post-translationally, crotonylation (Kcr) is specifically present in male germ cells and marks testis-specific genes in post-meiotic cells, including X-linked genes that escape sex chromosome inactivation in haploid cells. Crotonylation marks active promoters and enhancers and confers resistance to transcriptional repressors. It is also associated with post-meiotically activated genes on autosomes. Lactylated in macrophages by EP300/P300 by using lactoyl-CoA directly derived from endogenous or exogenous lactate, leading to stimulates gene transcription.

It is found in the nucleus. Its subcellular location is the chromosome. In terms of biological role, core component of nucleosome. Nucleosomes wrap and compact DNA into chromatin, limiting DNA accessibility to the cellular machineries which require DNA as a template. Histones thereby play a central role in transcription regulation, DNA repair, DNA replication and chromosomal stability. DNA accessibility is regulated via a complex set of post-translational modifications of histones, also called histone code, and nucleosome remodeling. The sequence is that of Histone H2B type 1-K from Bos taurus (Bovine).